Consider the following 168-residue polypeptide: Mediator of RNA polymerase II transcription subunit 7a (168 aa).

Coiled coils occupy residues 64–92 and 132–166; these read KDSN…ADVL and IMEL…LTLD.

It belongs to the Mediator complex subunit 7 family. Component of the Mediator complex. Interacts with MEE14/CBP1.

It is found in the nucleus. Component of the Mediator complex, a coactivator involved in the regulated transcription of nearly all RNA polymerase II-dependent genes. Mediator functions as a bridge to convey information from gene-specific regulatory proteins to the basal RNA polymerase II transcription machinery. The Mediator complex, having a compact conformation in its free form, is recruited to promoters by direct interactions with regulatory proteins and serves for the assembly of a functional pre-initiation complex with RNA polymerase II and the general transcription factors. In Arabidopsis thaliana (Mouse-ear cress), this protein is Mediator of RNA polymerase II transcription subunit 7a (MED7A).